Here is a 337-residue protein sequence, read N- to C-terminus: GTPase Obg (337 aa).

The region spanning 1-159 (MKFVDSASIF…LMLNMELKLM (159 aa)) is the Obg domain. An OBG-type G domain is found at 160-323 (ADVGLVGFPN…LKDELWREVS (164 aa)). GTP contacts are provided by residues 166-173 (GFPNAGKS), 191-195 (FTTLV), 213-216 (DIPG), 280-283 (TKMD), and 304-306 (SAV). Ser173 and Thr193 together coordinate Mg(2+).

The protein belongs to the TRAFAC class OBG-HflX-like GTPase superfamily. OBG GTPase family. Monomer. Requires Mg(2+) as cofactor.

It is found in the cytoplasm. Its function is as follows. An essential GTPase which binds GTP, GDP and possibly (p)ppGpp with moderate affinity, with high nucleotide exchange rates and a fairly low GTP hydrolysis rate. Plays a role in control of the cell cycle, stress response, ribosome biogenesis and in those bacteria that undergo differentiation, in morphogenesis control. In Pelodictyon phaeoclathratiforme (strain DSM 5477 / BU-1), this protein is GTPase Obg.